A 213-amino-acid chain; its full sequence is UPF0056 membrane protein AF_2111 (213 aa).

Helical transmembrane passes span 1–21 (MDIA…FIII), 51–71 (IIAF…LDYF), 75–95 (ISSL…DILL), 118–138 (VFPL…GIVL), 142–162 (AGDV…YSIV), and 181–201 (ADIA…EFVF).

It belongs to the UPF0056 (MarC) family.

Its subcellular location is the cell membrane. This is UPF0056 membrane protein AF_2111 from Archaeoglobus fulgidus (strain ATCC 49558 / DSM 4304 / JCM 9628 / NBRC 100126 / VC-16).